A 452-amino-acid polypeptide reads, in one-letter code: Serine incorporator 2 (452 aa).

The next 11 membrane-spanning stretches (helical) occupy residues 5–25, 41–61, 96–116, 131–151, 158–178, 205–225, 236–256, 266–286, 319–339, 387–407, and 426–446; these read LGAC…PCIL, FFTV…SPGV, AVYR…LLMV, GFWF…FYIP, IWFY…LLLL, LFFF…LLFV, GKVF…VAIL, SGLL…WLAL, WDAP…FISL, FFHL…TNWY, and ICAS…PLLL.

Belongs to the TDE1 family.

The protein resides in the cell membrane. It catalyses the reaction a 1,2-diacyl-sn-glycero-3-phospho-L-serine(in) = a 1,2-diacyl-sn-glycero-3-phospho-L-serine(out). It carries out the reaction a 1,2-diacyl-sn-glycero-3-phosphocholine(in) = a 1,2-diacyl-sn-glycero-3-phosphocholine(out). The enzyme catalyses a 1,2-diacyl-sn-glycero-3-phosphoethanolamine(in) = a 1,2-diacyl-sn-glycero-3-phosphoethanolamine(out). Non-ATP-dependent, non-specific lipid transporter for phosphatidylserine, phosphatidylcholine, and phosphatidylethanolamine. Functions as a scramblase that flips lipids in both directions across the membrane. In contrast to SERINC3 and SERINC5, has no effect on gammaretrovirus particles infectivity. This chain is Serine incorporator 2 (SERINC2), found in Bos taurus (Bovine).